The chain runs to 57 residues: Ribosome modulation factor 2 (57 aa).

The tract at residues 1-24 (MKRQKRDKLGRAHSNGYQAGLGGK) is disordered.

This sequence belongs to the ribosome modulation factor family.

The protein resides in the cytoplasm. During stationary phase, converts 70S ribosomes to an inactive dimeric form (100S ribosomes). In Colwellia psychrerythraea (strain 34H / ATCC BAA-681) (Vibrio psychroerythus), this protein is Ribosome modulation factor 2.